Here is a 571-residue protein sequence, read N- to C-terminus: Proline--tRNA ligase (571 aa).

The protein belongs to the class-II aminoacyl-tRNA synthetase family. ProS type 1 subfamily. In terms of assembly, homodimer.

The protein localises to the cytoplasm. The enzyme catalyses tRNA(Pro) + L-proline + ATP = L-prolyl-tRNA(Pro) + AMP + diphosphate. Its function is as follows. Catalyzes the attachment of proline to tRNA(Pro) in a two-step reaction: proline is first activated by ATP to form Pro-AMP and then transferred to the acceptor end of tRNA(Pro). As ProRS can inadvertently accommodate and process non-cognate amino acids such as alanine and cysteine, to avoid such errors it has two additional distinct editing activities against alanine. One activity is designated as 'pretransfer' editing and involves the tRNA(Pro)-independent hydrolysis of activated Ala-AMP. The other activity is designated 'posttransfer' editing and involves deacylation of mischarged Ala-tRNA(Pro). The misacylated Cys-tRNA(Pro) is not edited by ProRS. The polypeptide is Proline--tRNA ligase (Syntrophotalea carbinolica (strain DSM 2380 / NBRC 103641 / GraBd1) (Pelobacter carbinolicus)).